We begin with the raw amino-acid sequence, 258 residues long: 5'-nucleotidase SurE (258 aa).

A divalent metal cation is bound by residues D9, D10, S42, and N96.

The protein belongs to the SurE nucleotidase family. The cofactor is a divalent metal cation.

It is found in the cytoplasm. It carries out the reaction a ribonucleoside 5'-phosphate + H2O = a ribonucleoside + phosphate. Nucleotidase that shows phosphatase activity on nucleoside 5'-monophosphates. This is 5'-nucleotidase SurE from Campylobacter jejuni subsp. jejuni serotype O:23/36 (strain 81-176).